We begin with the raw amino-acid sequence, 203 residues long: Ribosomal RNA large subunit methyltransferase E (203 aa).

5 residues coordinate S-adenosyl-L-methionine: glycine 59, tryptophan 61, aspartate 79, aspartate 97, and aspartate 119. The active-site Proton acceptor is lysine 159.

The protein belongs to the class I-like SAM-binding methyltransferase superfamily. RNA methyltransferase RlmE family.

It is found in the cytoplasm. The catalysed reaction is uridine(2552) in 23S rRNA + S-adenosyl-L-methionine = 2'-O-methyluridine(2552) in 23S rRNA + S-adenosyl-L-homocysteine + H(+). Functionally, specifically methylates the uridine in position 2552 of 23S rRNA at the 2'-O position of the ribose in the fully assembled 50S ribosomal subunit. This chain is Ribosomal RNA large subunit methyltransferase E, found in Desulforapulum autotrophicum (strain ATCC 43914 / DSM 3382 / VKM B-1955 / HRM2) (Desulfobacterium autotrophicum).